The following is a 154-amino-acid chain: MKTFKGIASAKDMRVAIVGSCFNGPIADALVSGAAQTFLELGGAEDRLTIVRVPGAFEIPCTLKKLLTSGIEYHAIVACGVLIKGETTHYDHIADQVSARISELSVEYNLPITFSIITAPCVDSAWQRAGIKGSHLGVSGMRTALEMADLFKKL.

Residues F22, 56-58, and 81-83 contribute to the 5-amino-6-(D-ribitylamino)uracil site; these read AFE and VLI. 86-87 is a binding site for (2S)-2-hydroxy-3-oxobutyl phosphate; sequence ET. Residue H89 is the Proton donor of the active site. Residue F114 participates in 5-amino-6-(D-ribitylamino)uracil binding. R128 provides a ligand contact to (2S)-2-hydroxy-3-oxobutyl phosphate.

Belongs to the DMRL synthase family.

It carries out the reaction (2S)-2-hydroxy-3-oxobutyl phosphate + 5-amino-6-(D-ribitylamino)uracil = 6,7-dimethyl-8-(1-D-ribityl)lumazine + phosphate + 2 H2O + H(+). It functions in the pathway cofactor biosynthesis; riboflavin biosynthesis; riboflavin from 2-hydroxy-3-oxobutyl phosphate and 5-amino-6-(D-ribitylamino)uracil: step 1/2. Catalyzes the formation of 6,7-dimethyl-8-ribityllumazine by condensation of 5-amino-6-(D-ribitylamino)uracil with 3,4-dihydroxy-2-butanone 4-phosphate. This is the penultimate step in the biosynthesis of riboflavin. The protein is 6,7-dimethyl-8-ribityllumazine synthase of Chlamydia abortus (strain DSM 27085 / S26/3) (Chlamydophila abortus).